A 573-amino-acid polypeptide reads, in one-letter code: Isocitrate dehydrogenase kinase/phosphatase (573 aa).

ATP contacts are provided by residues 315-321 (APGIRGM) and K336. D371 is an active-site residue.

Belongs to the AceK family.

The protein localises to the cytoplasm. It carries out the reaction L-seryl-[isocitrate dehydrogenase] + ATP = O-phospho-L-seryl-[isocitrate dehydrogenase] + ADP + H(+). Its function is as follows. Bifunctional enzyme which can phosphorylate or dephosphorylate isocitrate dehydrogenase (IDH) on a specific serine residue. This is a regulatory mechanism which enables bacteria to bypass the Krebs cycle via the glyoxylate shunt in response to the source of carbon. When bacteria are grown on glucose, IDH is fully active and unphosphorylated, but when grown on acetate or ethanol, the activity of IDH declines drastically concomitant with its phosphorylation. This chain is Isocitrate dehydrogenase kinase/phosphatase, found in Enterobacter sp. (strain 638).